Reading from the N-terminus, the 485-residue chain is Glutamyl-tRNA(Gln) amidotransferase subunit A (485 aa).

Catalysis depends on charge relay system residues K79 and S154. S178 serves as the catalytic Acyl-ester intermediate.

This sequence belongs to the amidase family. GatA subfamily. As to quaternary structure, heterotrimer of A, B and C subunits.

The catalysed reaction is L-glutamyl-tRNA(Gln) + L-glutamine + ATP + H2O = L-glutaminyl-tRNA(Gln) + L-glutamate + ADP + phosphate + H(+). In terms of biological role, allows the formation of correctly charged Gln-tRNA(Gln) through the transamidation of misacylated Glu-tRNA(Gln) in organisms which lack glutaminyl-tRNA synthetase. The reaction takes place in the presence of glutamine and ATP through an activated gamma-phospho-Glu-tRNA(Gln). The chain is Glutamyl-tRNA(Gln) amidotransferase subunit A from Staphylococcus epidermidis (strain ATCC 35984 / DSM 28319 / BCRC 17069 / CCUG 31568 / BM 3577 / RP62A).